Reading from the N-terminus, the 113-residue chain is Probable UPF0122 protein (113 aa).

The protein belongs to the UPF0122 family.

Might take part in the signal recognition particle (SRP) pathway. This is inferred from the conservation of its genetic proximity to ftsY/ffh. May be a regulatory protein. The polypeptide is Probable UPF0122 protein (Mycoplasma mycoides).